Reading from the N-terminus, the 130-residue chain is Small ribosomal subunit protein bS6 (130 aa).

Residues 100–130 (SPMVKAKDERRERREDFAEAGDDVEAGDSEE) are disordered. Basic and acidic residues predominate over residues 104–116 (KAKDERRERREDF). Acidic residues predominate over residues 117–130 (AEAGDDVEAGDSEE).

It belongs to the bacterial ribosomal protein bS6 family.

Binds together with bS18 to 16S ribosomal RNA. The polypeptide is Small ribosomal subunit protein bS6 (Pectobacterium atrosepticum (strain SCRI 1043 / ATCC BAA-672) (Erwinia carotovora subsp. atroseptica)).